Reading from the N-terminus, the 427-residue chain is Mannosylglucosylglycerate synthase (427 aa).

Belongs to the glycosyltransferase group 1 family. It depends on Co(2+) as a cofactor. Mg(2+) is required as a cofactor. Mn(2+) serves as cofactor. Requires Ni(2+) as cofactor.

The catalysed reaction is (2R)-2-O-(alpha-D-glucopyranosyl)-glycerate + GDP-alpha-D-mannose = (2R)-2-O-[alpha-D-mannopyranosyl-(1-&gt;2)-alpha-D-glucopyranosyl]-glycerate + GDP + H(+). Catalyzes the synthesis of mannosylglucosylglycerate (MGG) from glucosylglycerate (GG) and GDP-mannose. The chain is Mannosylglucosylglycerate synthase from Thermotoga maritima (strain ATCC 43589 / DSM 3109 / JCM 10099 / NBRC 100826 / MSB8).